Consider the following 614-residue polypeptide: Jacalin-related lectin 14 (614 aa).

Jacalin-type lectin domains are found at residues 27–169, 172–314, 317–462, and 468–611; these read VQKM…YFSW, PRKM…YFTT, PTKS…YFSP, and AEKL…HVVP.

Belongs to the jacalin lectin family.

The protein is Jacalin-related lectin 14 (JAL14) of Arabidopsis thaliana (Mouse-ear cress).